We begin with the raw amino-acid sequence, 520 residues long: N-acetylgalactosamine-6-sulfatase (520 aa).

Positions 1-23 (MAACTAAQQLLLVLSALGLLAAG) are cleaved as a signal peptide. Positions 24–377 (APQPPNIVLL…PTMLKGQMMD (354 aa)) are catalytic domain. Positions 36, 37, and 76 each coordinate Ca(2+). Cys76 (nucleophile) is an active-site residue. Cys76 carries the 3-oxoalanine (Cys) modification. Residue His139 is part of the active site. Residue Asn201 is glycosylated (N-linked (GlcNAc...) asparagine). 2 residues coordinate Ca(2+): Asp286 and Asn287. Cys306 and Cys417 are disulfide-bonded. Asn421 carries N-linked (GlcNAc...) asparagine glycosylation. 2 cysteine pairs are disulfide-bonded: Cys487–Cys516 and Cys499–Cys505.

Belongs to the sulfatase family. In terms of assembly, homodimer. Requires Ca(2+) as cofactor. In terms of processing, the conversion to 3-oxoalanine (also known as C-formylglycine, FGly), of a serine or cysteine residue in prokaryotes and of a cysteine residue in eukaryotes, is critical for catalytic activity. As to expression, widely expressed. Higher expression in liver and kidney.

The protein resides in the lysosome. The enzyme catalyses Hydrolysis of the 6-sulfate groups of the N-acetyl-D-galactosamine 6-sulfate units of chondroitin sulfate and of the D-galactose 6-sulfate units of keratan sulfate.. In Mus musculus (Mouse), this protein is N-acetylgalactosamine-6-sulfatase (Galns).